Reading from the N-terminus, the 260-residue chain is Methylesterase 7 (260 aa).

S84 serves as the catalytic Acyl-ester intermediate. Residues D210 and H238 each act as charge relay system in the active site.

The protein belongs to the AB hydrolase superfamily. Methylesterase family.

The catalysed reaction is methyl (indol-3-yl)acetate + H2O = (indol-3-yl)acetate + methanol + H(+). It carries out the reaction methyl salicylate + H2O = salicylate + methanol + H(+). The protein operates within plant hormone biosynthesis. With respect to regulation, esterase activity is down-regulated by salicylic acid (SA). In terms of biological role, methylesterase shown to have carboxylesterase activity, methyl indole-3-acetic acid (MeIAA) esterase activity and methyl salicylate (MeSA) esterase activity in vitro. Required to convert methyl salicylate (MeSA) to salicylic acid (SA) as part of the signal transduction pathways that activate systemic acquired resistance in systemic tissue. MeSA is believed to be an inactive form that needs to be demethylated to exert a biological effect. The polypeptide is Methylesterase 7 (Arabidopsis thaliana (Mouse-ear cress)).